Here is a 172-residue protein sequence, read N- to C-terminus: Adenine phosphoribosyltransferase (172 aa).

This sequence belongs to the purine/pyrimidine phosphoribosyltransferase family. In terms of assembly, homodimer.

Its subcellular location is the cytoplasm. It catalyses the reaction AMP + diphosphate = 5-phospho-alpha-D-ribose 1-diphosphate + adenine. Its pathway is purine metabolism; AMP biosynthesis via salvage pathway; AMP from adenine: step 1/1. Catalyzes a salvage reaction resulting in the formation of AMP, that is energically less costly than de novo synthesis. The polypeptide is Adenine phosphoribosyltransferase (Prochlorococcus marinus (strain MIT 9303)).